The primary structure comprises 114 residues: Ribosome-binding factor A (114 aa).

The protein belongs to the RbfA family. In terms of assembly, monomer. Binds 30S ribosomal subunits, but not 50S ribosomal subunits or 70S ribosomes.

Its subcellular location is the cytoplasm. Its function is as follows. One of several proteins that assist in the late maturation steps of the functional core of the 30S ribosomal subunit. Associates with free 30S ribosomal subunits (but not with 30S subunits that are part of 70S ribosomes or polysomes). Required for efficient processing of 16S rRNA. May interact with the 5'-terminal helix region of 16S rRNA. This is Ribosome-binding factor A from Listeria welshimeri serovar 6b (strain ATCC 35897 / DSM 20650 / CCUG 15529 / CIP 8149 / NCTC 11857 / SLCC 5334 / V8).